A 252-amino-acid polypeptide reads, in one-letter code: Hydroxyacylglutathione hydrolase (252 aa).

Zn(2+) is bound by residues H54, H56, D58, H59, H111, D128, and H166.

The protein belongs to the metallo-beta-lactamase superfamily. Glyoxalase II family. In terms of assembly, monomer. Requires Zn(2+) as cofactor.

It catalyses the reaction an S-(2-hydroxyacyl)glutathione + H2O = a 2-hydroxy carboxylate + glutathione + H(+). The protein operates within secondary metabolite metabolism; methylglyoxal degradation; (R)-lactate from methylglyoxal: step 2/2. In terms of biological role, thiolesterase that catalyzes the hydrolysis of S-D-lactoyl-glutathione to form glutathione and D-lactic acid. The polypeptide is Hydroxyacylglutathione hydrolase (Vibrio vulnificus (strain CMCP6)).